Reading from the N-terminus, the 620-residue chain is MYND-type zinc finger protein MUB1 (620 aa).

An MYND-type; degenerate zinc finger spans residues 514–555 (NFSCGKWEDFPRQFAKCRRCKRTKYCSRKCQLKAWGYHRYWC). The Zn(2+) site is built by C530, C533, H551, and C555. The span at 563–606 (MRSTNTTTGVNTPNEPSSLNATATTAADVSNSTSTFTPNISTTV) shows a compositional bias: polar residues. The tract at residues 563 to 620 (MRSTNTTTGVNTPNEPSSLNATATTAADVSNSTSTFTPNISTTVPDEISNRDENSIPE) is disordered. Positions 610-620 (ISNRDENSIPE) are enriched in basic and acidic residues.

This sequence belongs to the MUB1/samB family. In terms of assembly, interacts with UBR2 and RPN4.

It is found in the cytoplasm. Involved in the determination of the onset of polarized growth. Required for the ubiquitin-dependent degradation of RPN4. Cooperates with UBR2 to transfer ubiquitin from RAD6 to RPN4. In Saccharomyces cerevisiae (strain ATCC 204508 / S288c) (Baker's yeast), this protein is MYND-type zinc finger protein MUB1 (MUB1).